Here is a 309-residue protein sequence, read N- to C-terminus: Aromatic prenyltransferase (309 aa).

It belongs to the aromatic prenyltransferase family.

Prenyltransferase that attaches isoprenoid moieties to carbon atoms of aromatic substrates in an enzyme-catalyzed Friedel-Crafts reaction. Shows specificity for dimethylallyl diphosphate (DMAPP) and does not accept geranyl diphosphate (GPP) or isopentenyl diphosphate (IPP). Prenylates the artificial substrate 2,7-dihydroxynaphthalene (2,7-DHN), as well as dihydrophenazine-1-carboxylic acid and 4-hydroxybenzoic acid at lower levels. Only traces of products are detected with aspulvinone E or flaviolin as substrates; and no product is formed with L-tryptophan, L-tyrosine, or 4-hydroxyphenylpyruvate. Ptf seems no to be involved in the prenylation reaction in the biosynthesis of aspulvinone H and J and the physiological function of ptf remains unknown. The protein is Aromatic prenyltransferase of Sclerotinia sclerotiorum (strain ATCC 18683 / 1980 / Ss-1) (White mold).